Here is a 321-residue protein sequence, read N- to C-terminus: Lipoyl synthase (321 aa).

7 residues coordinate [4Fe-4S] cluster: C68, C73, C79, C94, C98, C101, and S308. The Radical SAM core domain maps to 80–297; it reads FNHGTATFMI…KVLADELGFT (218 aa).

This sequence belongs to the radical SAM superfamily. Lipoyl synthase family. It depends on [4Fe-4S] cluster as a cofactor.

It is found in the cytoplasm. It carries out the reaction [[Fe-S] cluster scaffold protein carrying a second [4Fe-4S](2+) cluster] + N(6)-octanoyl-L-lysyl-[protein] + 2 oxidized [2Fe-2S]-[ferredoxin] + 2 S-adenosyl-L-methionine + 4 H(+) = [[Fe-S] cluster scaffold protein] + N(6)-[(R)-dihydrolipoyl]-L-lysyl-[protein] + 4 Fe(3+) + 2 hydrogen sulfide + 2 5'-deoxyadenosine + 2 L-methionine + 2 reduced [2Fe-2S]-[ferredoxin]. Its pathway is protein modification; protein lipoylation via endogenous pathway; protein N(6)-(lipoyl)lysine from octanoyl-[acyl-carrier-protein]: step 2/2. Catalyzes the radical-mediated insertion of two sulfur atoms into the C-6 and C-8 positions of the octanoyl moiety bound to the lipoyl domains of lipoate-dependent enzymes, thereby converting the octanoylated domains into lipoylated derivatives. In Shewanella sp. (strain MR-7), this protein is Lipoyl synthase.